Here is a 580-residue protein sequence, read N- to C-terminus: Protein O-linked-mannose beta-1,4-N-acetylglucosaminyltransferase 2 (580 aa).

Over 1-4 (MHLS) the chain is Cytoplasmic. The chain crosses the membrane as a helical; Signal-anchor for type II membrane protein span at residues 5–25 (AVFNALLVSVLAAVLWKHVRL). The Lumenal portion of the chain corresponds to 26 to 580 (REHAATLEEE…PFADVLVCNT (555 aa)). 2 N-linked (GlcNAc...) asparagine glycosylation sites follow: Asn99 and Asn276. A Fibronectin type-III domain is found at 488–580 (ARCQASVHGA…PFADVLVCNT (93 aa)).

Belongs to the glycosyltransferase 61 family. Highly expressed in the brain, muscle, heart, and kidney in both fetus and adult. In the brain, highest expression in the cortex and cerebellum. Highly expressed in the pancreas.

It localises to the endoplasmic reticulum membrane. The enzyme catalyses 3-O-(alpha-D-mannosyl)-L-threonyl-[protein] + UDP-N-acetyl-alpha-D-glucosamine = 3-O-(N-acetyl-beta-D-glucosaminyl-(1-&gt;4)-alpha-D-mannosyl)-L-threonyl-[protein] + UDP + H(+). It participates in protein modification; protein glycosylation. Its function is as follows. O-linked mannose beta-1,4-N-acetylglucosaminyltransferase that transfers UDP-N-acetyl-D-glucosamine to the 4-position of the mannose to generate N-acetyl-D-glucosamine-beta-1,4-O-D-mannosylprotein. Involved in the biosynthesis of the phosphorylated O-mannosyl trisaccharide (N-acetylgalactosamine-beta-3-N-acetylglucosamine-beta-4-(phosphate-6-)mannose), a carbohydrate structure present in alpha-dystroglycan (DAG1), which is required for binding laminin G-like domain-containing extracellular proteins with high affinity. This chain is Protein O-linked-mannose beta-1,4-N-acetylglucosaminyltransferase 2 (POMGNT2), found in Homo sapiens (Human).